Reading from the N-terminus, the 94-residue chain is CRISPR-associated endoribonuclease Cas2 (94 aa).

Asp-11 contacts Mg(2+).

The protein belongs to the CRISPR-associated endoribonuclease Cas2 protein family. Homodimer, forms a heterotetramer with a Cas1 homodimer. The cofactor is Mg(2+).

CRISPR (clustered regularly interspaced short palindromic repeat), is an adaptive immune system that provides protection against mobile genetic elements (viruses, transposable elements and conjugative plasmids). CRISPR clusters contain sequences complementary to antecedent mobile elements and target invading nucleic acids. CRISPR clusters are transcribed and processed into CRISPR RNA (crRNA). Functions as a ssRNA-specific endoribonuclease. Involved in the integration of spacer DNA into the CRISPR cassette. The protein is CRISPR-associated endoribonuclease Cas2 of Allochromatium vinosum (strain ATCC 17899 / DSM 180 / NBRC 103801 / NCIMB 10441 / D) (Chromatium vinosum).